The chain runs to 76 residues: MSKEKQSFEEMMKELENIVQKLDNEAVSLEESLDLYQRGMKLSANCDSTLKEAEKKVNELMQEEVGDKGNEETTDE.

This sequence belongs to the XseB family. Heterooligomer composed of large and small subunits.

It is found in the cytoplasm. The enzyme catalyses Exonucleolytic cleavage in either 5'- to 3'- or 3'- to 5'-direction to yield nucleoside 5'-phosphates.. Functionally, bidirectionally degrades single-stranded DNA into large acid-insoluble oligonucleotides, which are then degraded further into small acid-soluble oligonucleotides. This is Exodeoxyribonuclease 7 small subunit from Staphylococcus epidermidis (strain ATCC 35984 / DSM 28319 / BCRC 17069 / CCUG 31568 / BM 3577 / RP62A).